Reading from the N-terminus, the 259-residue chain is HTH-type transcriptional regulator Rv1719 (259 aa).

The HTH iclR-type domain maps to 13–75 (IQVIARAAEL…GARGPYRLGP (63 aa)). Positions 35 to 54 (QAEIGERVGMARSTVSRILN) form a DNA-binding region, H-T-H motif. The IclR-ED domain maps to 88–259 (VVTEMHPFLT…AWFNGTEDRK (172 aa)).

As to quaternary structure, homodimer.

Its function is as follows. Binds to the upstream region of Rv1714 and probably modulates the expression of the downstream gene(s). The polypeptide is HTH-type transcriptional regulator Rv1719 (Mycobacterium tuberculosis (strain ATCC 25618 / H37Rv)).